The sequence spans 261 residues: Cytochrome c oxidase subunit 3 (261 aa).

The Mitochondrial matrix segment spans residues 1–15 (MTHQTHAYHMVNPSP). A helical transmembrane segment spans residues 16–34 (WPLTGALSALLMTSGLIMW). The Mitochondrial intermembrane segment spans residues 35-40 (FHFNST). A helical membrane pass occupies residues 41–66 (TLLMLGLTTNMLTMYQWWRDIIREST). The Mitochondrial matrix segment spans residues 67-72 (FQGHHT). The chain crosses the membrane as a helical span at residues 73 to 105 (PNVQKGLRYGMILFIISEVLFFTGFFWAFYHSS). Residues 106–128 (LAPTPELGGCWPPTGIHPLNPLE) are Mitochondrial intermembrane-facing. A helical transmembrane segment spans residues 129–152 (VPLLNTSVLLASGVSITWAHHSLM). Topologically, residues 153–155 (EGN) are mitochondrial matrix. The helical transmembrane segment at 156–183 (RNHMLQALFITIALGVYFTLLQASEYYE) threads the bilayer. Residues 184–190 (APFTISD) lie on the Mitochondrial intermembrane side of the membrane. The helical transmembrane segment at 191–223 (GVYGSTFFVATGFHGLHVIIGSTFLIVCFFRQL) threads the bilayer. Over 224–232 (KFHFTSSHH) the chain is Mitochondrial matrix. A helical transmembrane segment spans residues 233–256 (FGFEAAAWYWHFVDVVWLFLYVSI). The Mitochondrial intermembrane portion of the chain corresponds to 257 to 261 (YWWGS).

This sequence belongs to the cytochrome c oxidase subunit 3 family. As to quaternary structure, component of the cytochrome c oxidase (complex IV, CIV), a multisubunit enzyme composed of 14 subunits. The complex is composed of a catalytic core of 3 subunits MT-CO1, MT-CO2 and MT-CO3, encoded in the mitochondrial DNA, and 11 supernumerary subunits COX4I, COX5A, COX5B, COX6A, COX6B, COX6C, COX7A, COX7B, COX7C, COX8 and NDUFA4, which are encoded in the nuclear genome. The complex exists as a monomer or a dimer and forms supercomplexes (SCs) in the inner mitochondrial membrane with NADH-ubiquinone oxidoreductase (complex I, CI) and ubiquinol-cytochrome c oxidoreductase (cytochrome b-c1 complex, complex III, CIII), resulting in different assemblies (supercomplex SCI(1)III(2)IV(1) and megacomplex MCI(2)III(2)IV(2)).

It is found in the mitochondrion inner membrane. The enzyme catalyses 4 Fe(II)-[cytochrome c] + O2 + 8 H(+)(in) = 4 Fe(III)-[cytochrome c] + 2 H2O + 4 H(+)(out). Functionally, component of the cytochrome c oxidase, the last enzyme in the mitochondrial electron transport chain which drives oxidative phosphorylation. The respiratory chain contains 3 multisubunit complexes succinate dehydrogenase (complex II, CII), ubiquinol-cytochrome c oxidoreductase (cytochrome b-c1 complex, complex III, CIII) and cytochrome c oxidase (complex IV, CIV), that cooperate to transfer electrons derived from NADH and succinate to molecular oxygen, creating an electrochemical gradient over the inner membrane that drives transmembrane transport and the ATP synthase. Cytochrome c oxidase is the component of the respiratory chain that catalyzes the reduction of oxygen to water. Electrons originating from reduced cytochrome c in the intermembrane space (IMS) are transferred via the dinuclear copper A center (CU(A)) of subunit 2 and heme A of subunit 1 to the active site in subunit 1, a binuclear center (BNC) formed by heme A3 and copper B (CU(B)). The BNC reduces molecular oxygen to 2 water molecules using 4 electrons from cytochrome c in the IMS and 4 protons from the mitochondrial matrix. This chain is Cytochrome c oxidase subunit 3 (MT-CO3), found in Litocranius walleri (Gerenuk).